We begin with the raw amino-acid sequence, 696 residues long: Elongation factor G (696 aa).

One can recognise a tr-type G domain in the interval Glu-8–Val-286. Residues Ala-17–Thr-24, Asp-81–His-85, and Asn-135–Asp-138 each bind GTP.

Belongs to the TRAFAC class translation factor GTPase superfamily. Classic translation factor GTPase family. EF-G/EF-2 subfamily.

The protein localises to the cytoplasm. In terms of biological role, catalyzes the GTP-dependent ribosomal translocation step during translation elongation. During this step, the ribosome changes from the pre-translocational (PRE) to the post-translocational (POST) state as the newly formed A-site-bound peptidyl-tRNA and P-site-bound deacylated tRNA move to the P and E sites, respectively. Catalyzes the coordinated movement of the two tRNA molecules, the mRNA and conformational changes in the ribosome. The polypeptide is Elongation factor G (Sulfurovum sp. (strain NBC37-1)).